The chain runs to 590 residues: Probable indole-3-acetic acid-amido synthetase GH3.1 (590 aa).

The protein belongs to the IAA-amido conjugating enzyme family.

Functionally, catalyzes the synthesis of indole-3-acetic acid (IAA)-amino acid conjugates, providing a mechanism for the plant to cope with the presence of excess auxin. This is Probable indole-3-acetic acid-amido synthetase GH3.1 (GH3.1) from Arabidopsis thaliana (Mouse-ear cress).